A 221-amino-acid polypeptide reads, in one-letter code: GTP-binding nuclear protein Ran-3 (221 aa).

The 165-residue stretch at Asp-10–Asp-174 folds into the Small GTPase Ran-type domain. Asp-21 to Thr-28 provides a ligand contact to GTP. Positions Lys-40–Val-48 are switch-I. Residues Gly-71, Asn-125–Asp-128, and Ser-153–Lys-155 contribute to the GTP site. The segment at Gly-71–Gln-87 is switch-II. The tract at residues Glu-201–Glu-221 is disordered.

It belongs to the small GTPase superfamily. Ran family. Found in a nuclear export complex with RanGTP, exportin and pre-miRNA. Interacts with RanBP1a and RanBP1b. Interacts with KPNB1.

Its subcellular location is the nucleus. GTP-binding protein involved in nucleocytoplasmic transport. Required for the import of protein into the nucleus and also for RNA export. Involved in chromatin condensation and control of cell cycle. This Arabidopsis thaliana (Mouse-ear cress) protein is GTP-binding nuclear protein Ran-3 (RAN3).